A 469-amino-acid chain; its full sequence is UDP-N-acetylmuramate--L-alanine ligase (469 aa).

An ATP-binding site is contributed by 113 to 119 (GTHGKTT).

The protein belongs to the MurCDEF family.

It is found in the cytoplasm. It catalyses the reaction UDP-N-acetyl-alpha-D-muramate + L-alanine + ATP = UDP-N-acetyl-alpha-D-muramoyl-L-alanine + ADP + phosphate + H(+). It functions in the pathway cell wall biogenesis; peptidoglycan biosynthesis. In terms of biological role, cell wall formation. This Neisseria meningitidis serogroup B (strain ATCC BAA-335 / MC58) protein is UDP-N-acetylmuramate--L-alanine ligase.